The chain runs to 360 residues: Peptide chain release factor 1 (360 aa).

Gln-235 carries the N5-methylglutamine modification.

It belongs to the prokaryotic/mitochondrial release factor family. Post-translationally, methylated by PrmC. Methylation increases the termination efficiency of RF1.

The protein localises to the cytoplasm. Its function is as follows. Peptide chain release factor 1 directs the termination of translation in response to the peptide chain termination codons UAG and UAA. The protein is Peptide chain release factor 1 of Delftia acidovorans (strain DSM 14801 / SPH-1).